Consider the following 368-residue polypeptide: P2X receptor C (368 aa).

Residues 1-24 (MLDWDSILAYNTIKVVRIRDRRLG) are Cytoplasmic-facing. The helical transmembrane segment at 25–45 (ILHLIFMIAIISYVVIYSAII) threads the bilayer. Over 46–368 (KKGYLSIEEP…DKLYHNIEAL (323 aa)) the chain is Lumenal. Positions 282 to 295 (RHAIRLIFIQTGVI) are pore-forming motif.

Belongs to the P2X receptor family.

It is found in the contractile vacuole membrane. In terms of biological role, P2X receptors are ligand-gated ion channels that play a role in intracellular calcium signaling. ATP does not evoke inward currents in p2xC. Not essential for osmoregulation. The chain is P2X receptor C (p2xC) from Dictyostelium discoideum (Social amoeba).